A 335-amino-acid polypeptide reads, in one-letter code: Malate dehydrogenase 1 (335 aa).

Residues 11–16 (GAGNVG) and aspartate 35 each bind NAD(+). Substrate contacts are provided by arginine 97 and arginine 103. NAD(+) contacts are provided by residues asparagine 110 and 133 to 135 (VTN). Substrate is bound by residues asparagine 135 and arginine 166. Histidine 190 acts as the Proton acceptor in catalysis.

This sequence belongs to the LDH/MDH superfamily. MDH type 3 family.

It catalyses the reaction (S)-malate + NAD(+) = oxaloacetate + NADH + H(+). In terms of biological role, catalyzes the reversible oxidation of malate to oxaloacetate. This chain is Malate dehydrogenase 1 (mdh1), found in Aquifex aeolicus (strain VF5).